The following is a 304-amino-acid chain: Polyisoprenyl-teichoic acid--peptidoglycan teichoic acid transferase TagU (304 aa).

The Cytoplasmic segment spans residues 1 to 4 (MKKK). Residues 5–25 (ILFWILGIIGILIIGGGAYAY) traverse the membrane as a helical; Signal-anchor for type II membrane protein segment. Residues 26-304 (SIYSSVSKTL…KLRAHLEVTK (279 aa)) lie on the Extracellular side of the membrane.

The protein belongs to the LytR/CpsA/Psr (LCP) family.

Its subcellular location is the cell membrane. It functions in the pathway cell wall biogenesis. Its function is as follows. May catalyze the final step in cell wall teichoic acid biosynthesis, the transfer of the anionic cell wall polymers (APs) from their lipid-linked precursor to the cell wall peptidoglycan (PG). The chain is Polyisoprenyl-teichoic acid--peptidoglycan teichoic acid transferase TagU from Bacillus cereus (strain ATCC 14579 / DSM 31 / CCUG 7414 / JCM 2152 / NBRC 15305 / NCIMB 9373 / NCTC 2599 / NRRL B-3711).